Consider the following 567-residue polypeptide: Urease subunit alpha (567 aa).

The 439-residue stretch at 129-567 (GGIDAHIHFI…LPMAQRYFLF (439 aa)) folds into the Urease domain. Residues His134, His136, and Lys217 each coordinate Ni(2+). Lys217 bears the N6-carboxylysine mark. His219 contributes to the substrate binding site. Residues His246 and His272 each contribute to the Ni(2+) site. His320 functions as the Proton donor in the catalytic mechanism. Asp360 serves as a coordination point for Ni(2+).

This sequence belongs to the metallo-dependent hydrolases superfamily. Urease alpha subunit family. As to quaternary structure, heterotrimer of UreA (gamma), UreB (beta) and UreC (alpha) subunits. Three heterotrimers associate to form the active enzyme. Requires Ni cation as cofactor. Carboxylation allows a single lysine to coordinate two nickel ions.

The protein localises to the cytoplasm. It carries out the reaction urea + 2 H2O + H(+) = hydrogencarbonate + 2 NH4(+). Its pathway is nitrogen metabolism; urea degradation; CO(2) and NH(3) from urea (urease route): step 1/1. This chain is Urease subunit alpha, found in Teredinibacter turnerae (strain ATCC 39867 / T7901).